A 239-amino-acid polypeptide reads, in one-letter code: MQRGALSPVLMLSAAPEPPPRPPPALSPPGSGPGSGSRHGSARPGPTPEPSGSLGAALDSSLRAAVAFKAEGQRCYREKKFREAIGKYHRALLQLKAAQGARPSGLPAPAPGPTSSPGPARLSEEQRRLVESTEVECYDSLTACLLQSELVNYERVREYCLKVLEKQQGNFKATYRAGIAFYHLGDYARALRYLQEARSREPTDTNVLRYIQLTQLKMNRCSLQREDSGAGSQTRDVIG.

Disordered stretches follow at residues 1–57 (MQRG…LGAA) and 99–126 (QGAR…SEEQ). Residues S7 and S27 each carry the phosphoserine modification. A compositionally biased stretch (pro residues) spans 16 to 31 (PEPPPRPPPALSPPGS). Residues 65 to 99 (AVAFKAEGQRCYREKKFREAIGKYHRALLQLKAAQ) form a TPR 1 repeat. The segment covering 106–116 (LPAPAPGPTSS) has biased composition (pro residues). The stretch at 171–204 (FKATYRAGIAFYHLGDYARALRYLQEARSREPTD) is one TPR 2 repeat.

The protein belongs to the TTC9 family.

The chain is Tetratricopeptide repeat protein 9B (TTC9B) from Homo sapiens (Human).